We begin with the raw amino-acid sequence, 61 residues long: Small ribosomal subunit protein uS14 (61 aa).

Residues cysteine 24, cysteine 27, cysteine 40, and cysteine 43 each contribute to the Zn(2+) site.

Belongs to the universal ribosomal protein uS14 family. Zinc-binding uS14 subfamily. As to quaternary structure, part of the 30S ribosomal subunit. Contacts proteins S3 and S10. The cofactor is Zn(2+).

Its function is as follows. Binds 16S rRNA, required for the assembly of 30S particles and may also be responsible for determining the conformation of the 16S rRNA at the A site. In Deinococcus deserti (strain DSM 17065 / CIP 109153 / LMG 22923 / VCD115), this protein is Small ribosomal subunit protein uS14.